Here is a 237-residue protein sequence, read N- to C-terminus: Acyl-coenzyme A thioesterase THEM4 (237 aa).

A mitochondrion-targeting transit peptide spans 1–36 (MLRSCTAGLRSIWALRGRREGAPRLSMDLQPARRLF). Residue Ser37 is modified to Phosphoserine. N6-succinyllysine occurs at positions 55, 66, and 98. Residue Asp161 is the Proton donor/acceptor of the active site. Residues Asn180, Lys182, and 203-204 (RK) each bind substrate. Residue Lys204 is modified to N6-succinyllysine.

Belongs to the THEM4/THEM5 thioesterase family. In terms of assembly, homodimer and homotetramer. Interacts with AKT1 in the cytosol. In terms of processing, phosphorylated.

It localises to the cell membrane. It is found in the cell projection. Its subcellular location is the ruffle membrane. The protein resides in the cytoplasm. The protein localises to the mitochondrion. It localises to the mitochondrion inner membrane. It is found in the mitochondrion intermembrane space. It carries out the reaction hexadecanoyl-CoA + H2O = hexadecanoate + CoA + H(+). It catalyses the reaction octanoyl-CoA + H2O = octanoate + CoA + H(+). The enzyme catalyses decanoyl-CoA + H2O = decanoate + CoA + H(+). The catalysed reaction is dodecanoyl-CoA + H2O = dodecanoate + CoA + H(+). It carries out the reaction tetradecanoyl-CoA + H2O = tetradecanoate + CoA + H(+). It catalyses the reaction (9Z)-octadecenoyl-CoA + H2O = (9Z)-octadecenoate + CoA + H(+). The enzyme catalyses (5Z,8Z,11Z,14Z)-eicosatetraenoyl-CoA + H2O = (5Z,8Z,11Z,14Z)-eicosatetraenoate + CoA + H(+). Its function is as follows. Has acyl-CoA thioesterase activity towards medium and long-chain (C14 to C18) fatty acyl-CoA substrates, and probably plays a role in mitochondrial fatty acid metabolism. Plays a role in the apoptotic process, possibly via its regulation of AKT1 activity. The protein is Acyl-coenzyme A thioesterase THEM4 (THEM4) of Bos taurus (Bovine).